We begin with the raw amino-acid sequence, 267 residues long: 4-hydroxy-tetrahydrodipicolinate reductase (267 aa).

Residues 8-13 (GAAGRM) and Asp34 each bind NAD(+). Arg35 serves as a coordination point for NADP(+). NAD(+) contacts are provided by residues 98–100 (GTT) and 122–125 (AANF). Catalysis depends on His155, which acts as the Proton donor/acceptor. His156 contributes to the (S)-2,3,4,5-tetrahydrodipicolinate binding site. Catalysis depends on Lys159, which acts as the Proton donor. (S)-2,3,4,5-tetrahydrodipicolinate is bound at residue 165–166 (GT).

The protein belongs to the DapB family.

It is found in the cytoplasm. It catalyses the reaction (S)-2,3,4,5-tetrahydrodipicolinate + NAD(+) + H2O = (2S,4S)-4-hydroxy-2,3,4,5-tetrahydrodipicolinate + NADH + H(+). It carries out the reaction (S)-2,3,4,5-tetrahydrodipicolinate + NADP(+) + H2O = (2S,4S)-4-hydroxy-2,3,4,5-tetrahydrodipicolinate + NADPH + H(+). It participates in amino-acid biosynthesis; L-lysine biosynthesis via DAP pathway; (S)-tetrahydrodipicolinate from L-aspartate: step 4/4. Functionally, catalyzes the conversion of 4-hydroxy-tetrahydrodipicolinate (HTPA) to tetrahydrodipicolinate. The sequence is that of 4-hydroxy-tetrahydrodipicolinate reductase from Pseudomonas entomophila (strain L48).